Reading from the N-terminus, the 406-residue chain is Mitochondrial ribosome-associated GTPase 2 (406 aa).

Positions 15 to 406 are localized in the mitochondria; the sequence is FQGVGHWALS…LGQGRQPLRW (392 aa). The tract at residues 30 to 406 is not localized in the mitochondria; that stretch reads KPSRLLPQRA…LGQGRQPLRW (377 aa). The 155-residue stretch at 70-224 folds into the Obg domain; that stretch reads RYFVDYRRVL…RVLHLELKTV (155 aa). The OBG-type G domain occupies 225-390; sequence AHAGMVGFPN…LLLHLKVLYD (166 aa). GTP contacts are provided by residues 231-238, 256-260, 278-281, 345-348, and 371-373; these read GFPNAGKS, FTTLK, DIPG, NKID, and SAL. Residues S238 and T258 each coordinate Mg(2+).

Belongs to the TRAFAC class OBG-HflX-like GTPase superfamily. OBG GTPase family. In terms of assembly, associates with the mitochondrial ribosome large subunit; the association occurs in a GTP-dependent manner. The cofactor is Mg(2+).

It is found in the mitochondrion. It localises to the mitochondrion inner membrane. In terms of biological role, plays a role in the regulation of the mitochondrial ribosome assembly and of translational activity. Displays GTPase activity. Involved in the ribosome maturation process. The protein is Mitochondrial ribosome-associated GTPase 2 (MTG2) of Homo sapiens (Human).